The chain runs to 562 residues: NAD-dependent malic enzyme (562 aa).

Residue Tyr-101 is the Proton donor of the active site. Arg-154 lines the NAD(+) pocket. Lys-172 (proton acceptor) is an active-site residue. Glu-243, Asp-244, and Asp-267 together coordinate a divalent metal cation. 2 residues coordinate NAD(+): Asp-267 and Asn-415.

The protein belongs to the malic enzymes family. As to quaternary structure, homotetramer. Requires Mg(2+) as cofactor. Mn(2+) serves as cofactor.

It carries out the reaction (S)-malate + NAD(+) = pyruvate + CO2 + NADH. The catalysed reaction is oxaloacetate + H(+) = pyruvate + CO2. This chain is NAD-dependent malic enzyme, found in Colwellia psychrerythraea (strain 34H / ATCC BAA-681) (Vibrio psychroerythus).